The chain runs to 119 residues: Ergochrome gene cluster protein CPUR_05426 (119 aa).

The protein operates within pigment biosynthesis. Its function is as follows. Part of the ergochrome gene cluster responsible for the typical purple-black color of the ergot sclerotia. The ergochrome gene cluster produces several ergot pigments including the yellow ergochrome secalonic acid and its derivatives, as well as the red anthraquinones endocrocin and clavorubin. The pathway begins with the synthesis of atrochrysone thioester by the polyketide synthase (PKS) CPUR_05437. The atrochrysone carboxyl ACP thioesterase CPUR_05436 then breaks the thioester bond and releases the atrochrysone carboxylic acid from CPUR_05437. The atrochrysone carboxylic acid is then converted to atrochrysone which is further transformed into emodin anthrone. The next step is performed by the anthrone oxygenase CPUR_05434 that catalyzes the oxidation of emodinanthrone to emodin. Emodin is further modified to yield monodictyphenone via several steps involving CPUR_05427, CPUR_05428, CPUR_05429 and CPUR_05430. The short chain dehydrogenase/reductase CPUR_05418 then catalyzes the C-5 ketoreduction to give the xanthone skeleton of the monomeric units. Ergochromes formation requires further dimerization steps of different xanthone units, probably catalyzed by the cytochrome P450 monooxygenase CPUR_05419. CPUR_05425, CPUR_05426 and CPUR_05431 are unique to Claviceps, thus it is likely that they are involved in further modification of xanthone units or in their dimerization. The yellow ergochromes and the red anthraquinone pigments endocrocin and clavorubin are products from the same PKS derived precursors and the latter are likely shunt products in the pathway of xanthone biosynthesis. It is proposed that atrochrysone carboxylic acid released from the PKS CPUR_05437 can also be converted to endocrocin anthrone which is further oxidized into endocrocin by CPUR_05435. Endocrocin could be then modified to clavorubin, possibly by CPUR_05423 and CPUR_05431. Clavorubin is the principal anthraquinone metabolite produced by the cluster with a much higher yield compared to endocrocin. The sequence is that of Ergochrome gene cluster protein CPUR_05426 from Claviceps purpurea (strain 20.1) (Ergot fungus).